The chain runs to 263 residues: Outer membrane lipoprotein 3 (263 aa).

A signal peptide spans 1–19 (MKIMKLAGAVAIFSLFLTA). C20 is lipidated: N-palmitoyl cysteine. C20 carries the S-diacylglycerol cysteine lipid modification.

This sequence belongs to the NlpA lipoprotein family.

The protein resides in the cell outer membrane. This Mannheimia haemolytica (Pasteurella haemolytica) protein is Outer membrane lipoprotein 3 (plpC).